The following is a 214-amino-acid chain: Vascular endothelial growth factor A (214 aa).

Positions 1–26 (MNFLLSWVHWTLALLLYLHHAKWSQA) are cleaved as a signal peptide. Intrachain disulfides connect C51/C93, C82/C127, and C86/C129. N-linked (GlcNAc...) asparagine glycosylation is present at N100. The segment covering 131 to 142 (PKKDRTKPEKKS) has biased composition (basic and acidic residues). Residues 131–159 (PKKDRTKPEKKSVRGKGKGQKRKRKKSRF) are disordered. Over residues 143–159 (VRGKGKGQKRKRKKSRF) the composition is skewed to basic residues.

This sequence belongs to the PDGF/VEGF growth factor family. In terms of assembly, homodimer; disulfide-linked. Also found as heterodimer with PGF. Interacts with NRP1. Interacts with isoform 2 of BSG. Interacts with CD82; this interaction inhibits VEGFA-mediated signaling pathway. Expressed in the pituitary, in brain, in particularly in supraoptic and paraventricular nuclei and the choroid plexus. Also found abundantly in the corpus luteum of the ovary and in kidney glomeruli. Expressed in the ductal epithelial cells of post-pubertal mammary glands. Expressed in the ductal and alveolar epithelial cells throughout the whole period of gestational evolution, lactation and involution.

It localises to the secreted. Growth factor active in angiogenesis, vasculogenesis and endothelial cell growth. Induces endothelial cell proliferation, promotes cell migration, inhibits apoptosis and induces permeabilization of blood vessels. Binds to the FLT1/VEGFR1 and KDR/VEGFR2 receptors, heparan sulfate and heparin. May play a role in increasing vascular permeability during lactation, when increased transport of molecules from the blood is required for efficient milk protein synthesis. Binding to NRP1 receptor initiates a signaling pathway needed for motor neuron axon guidance and cell body migration, including for the caudal migration of facial motor neurons from rhombomere 4 to rhombomere 6 during embryonic development. Also binds the DEAR/FBXW7-AS1 receptor. The sequence is that of Vascular endothelial growth factor A (Vegfa) from Rattus norvegicus (Rat).